Here is a 340-residue protein sequence, read N- to C-terminus: Heat-inducible transcription repressor HrcA (340 aa).

The protein belongs to the HrcA family.

In terms of biological role, negative regulator of class I heat shock genes (grpE-dnaK-dnaJ and groELS operons). Prevents heat-shock induction of these operons. In Phytoplasma australiense, this protein is Heat-inducible transcription repressor HrcA.